The sequence spans 1327 residues: Vascular endothelial growth factor receptor 1 (1327 aa).

The signal sequence occupies residues 1–24; the sequence is MPRQLLSGTVLLGAAFLLAGSTSG. Residues 25–749 are Extracellular-facing; it reads SKLKVPVLSV…GTVERSNLEL (725 aa). 7 Ig-like C2-type domains span residues 30-121, 120-222, 227-323, 331-417, 424-545, 552-644, and 651-737; these read PVLS…SIVY, VYVF…HRET, DIKL…TTVI, NLKR…LTVT, PQIY…RNVS, PSGF…KDVS, and PALL…AYVT. Asn-48, Asn-73, Asn-82, Asn-98, and Asn-125 each carry an N-linked (GlcNAc...) asparagine glycan. Residues Cys-51 and Cys-105 are joined by a disulfide bond. Residues Cys-154 and Cys-203 are joined by a disulfide bond. Asn-247 carries N-linked (GlcNAc...) asparagine glycosylation. A disulfide bridge connects residues Cys-248 and Cys-307. N-linked (GlcNAc...) asparagine glycans are attached at residues Asn-319, Asn-383, Asn-398, Asn-409, Asn-413, Asn-470, Asn-512, Asn-543, Asn-593, Asn-615, and Asn-663. Cys-450 and Cys-531 form a disulfide bridge. Cys-573 and Cys-626 form a disulfide bridge. The cysteines at positions 672 and 721 are disulfide-linked. The chain crosses the membrane as a helical span at residues 750 to 770; it reads ITLTCTCVAATLFWLLLTLFI. Topologically, residues 771-1327 are cytoplasmic; the sequence is RKLKRPYFSE…SVVHYSQPSI (557 aa). Residues 819–1151 form the Protein kinase domain; it reads LKLGKSLGHG…ELVKRLGDLL (333 aa). ATP-binding positions include 825–833 and Lys-853; that span reads LGHGAFGKV. The tract at residues 950–971 is disordered; it reads ASVTSSESFASSGFQEDKSLSD. Residues 951–961 show a composition bias toward low complexity; sequence SVTSSESFASS. Asp-1015 acts as the Proton acceptor in catalysis. Residues Tyr-1046, Tyr-1162, Tyr-1202, Tyr-1231, Tyr-1316, and Tyr-1322 each carry the phosphotyrosine; by autocatalysis modification.

Belongs to the protein kinase superfamily. Tyr protein kinase family. CSF-1/PDGF receptor subfamily. In terms of assembly, interacts with VEGFA, VEGFB and PGF. Monomer in the absence of bound VEGFA, VEGFB or PGF. Homodimer in the presence of bound VEGFA, VEGFB and PGF. In terms of processing, autophosphorylated on tyrosine residues upon ligand binding.

Its subcellular location is the cell membrane. The protein localises to the endosome. It is found in the secreted. The catalysed reaction is L-tyrosyl-[protein] + ATP = O-phospho-L-tyrosyl-[protein] + ADP + H(+). Its activity is regulated as follows. Present in an inactive conformation in the absence of bound ligand. Binding of VEGFA, VEGFB or PGF leads to dimerization and activation by autophosphorylation on tyrosine residues. Functionally, tyrosine-protein kinase that acts as a cell-surface receptor for VEGFA, VEGFB and PGF, and plays an essential role in the regulation of angiogenesis, cell survival, cell migration, macrophage function, and chemotaxis. Acts as a positive regulator of postnatal retinal hyaloid vessel regression. Has very high affinity for VEGFA and relatively low protein kinase activity; may function as a negative regulator of VEGFA signaling by limiting the amount of free VEGFA and preventing its binding to KDR. Ligand binding leads to the activation of several signaling cascades. Activation of PLCG1 leads to the production of the cellular signaling molecules diacylglycerol and inositol 1,4,5-trisphosphate and the activation of protein kinase C. Mediates phosphorylation of PIK3R1, the regulatory subunit of phosphatidylinositol 3-kinase, leading to activation of phosphatidylinositol kinase and the downstream signaling pathway. Mediates activation of MAPK1/ERK2, MAPK3/ERK1 and the MAP kinase signaling pathway, as well as of the AKT1 signaling pathway. Phosphorylates PLCG1. Promotes phosphorylation of AKT1 and CBL. The polypeptide is Vascular endothelial growth factor receptor 1 (FLT1) (Gallus gallus (Chicken)).